The following is a 31-amino-acid chain: Cyclotide cter-D (31 aa).

The cyclopeptide (Gly-Asn) cross-link spans 1–31 (GIPCAESCVWIPCTVTALLGCSCKDKVCYLN). 3 disulfide bridges follow: cysteine 4-cysteine 21, cysteine 8-cysteine 23, and cysteine 13-cysteine 28.

In terms of processing, contains 3 disulfide bonds. This is a cyclic peptide. As to expression, expressed in root, seed and nodule but not in flower, stem, shoot, leaf and pod.

Probably participates in a plant defense mechanism. The protein is Cyclotide cter-D of Clitoria ternatea (Butterfly pea).